We begin with the raw amino-acid sequence, 20 residues long: Agglutinin beta-2 chain (20 aa).

The interval 1–20 (GRNGKSQSIIVGPWGDRVTN) is disordered.

The protein belongs to the jacalin lectin family. In terms of assembly, formed of four alpha chains and four beta chains.

Its function is as follows. D-galactose-specific lectin, binds the T-antigen structure Gal-beta1,3-GalNAc. This is Agglutinin beta-2 chain from Maclura pomifera (Osage orange).